Here is a 152-residue protein sequence, read N- to C-terminus: Small ribosomal subunit protein bS6 (152 aa).

Residues 96-152 (HEEGPSAMLQKRDRDDRGERGDRGDRGDRGDRGFGGREDRPRRPRPTEESHGGEEEV) are disordered.

Belongs to the bacterial ribosomal protein bS6 family.

Binds together with bS18 to 16S ribosomal RNA. This Xanthobacter autotrophicus (strain ATCC BAA-1158 / Py2) protein is Small ribosomal subunit protein bS6.